A 467-amino-acid chain; its full sequence is Argininosuccinate lyase (467 aa).

This sequence belongs to the lyase 1 family. Argininosuccinate lyase subfamily.

Its subcellular location is the cytoplasm. The catalysed reaction is 2-(N(omega)-L-arginino)succinate = fumarate + L-arginine. Its pathway is amino-acid biosynthesis; L-arginine biosynthesis; L-arginine from L-ornithine and carbamoyl phosphate: step 3/3. This is Argininosuccinate lyase from Thioalkalivibrio sulfidiphilus (strain HL-EbGR7).